Reading from the N-terminus, the 206-residue chain is Octanoyltransferase (206 aa).

One can recognise a BPL/LPL catalytic domain in the interval 30-206 (PETNDEIWLV…EFVTLLNNSI (177 aa)). Substrate is bound by residues 69-76 (RGGQVTYH), 137-139 (SLG), and 150-152 (GIA). C168 functions as the Acyl-thioester intermediate in the catalytic mechanism.

Belongs to the LipB family.

It localises to the cytoplasm. The catalysed reaction is octanoyl-[ACP] + L-lysyl-[protein] = N(6)-octanoyl-L-lysyl-[protein] + holo-[ACP] + H(+). Its pathway is protein modification; protein lipoylation via endogenous pathway; protein N(6)-(lipoyl)lysine from octanoyl-[acyl-carrier-protein]: step 1/2. Functionally, catalyzes the transfer of endogenously produced octanoic acid from octanoyl-acyl-carrier-protein onto the lipoyl domains of lipoate-dependent enzymes. Lipoyl-ACP can also act as a substrate although octanoyl-ACP is likely to be the physiological substrate. The sequence is that of Octanoyltransferase from Francisella tularensis subsp. novicida (strain U112).